A 904-amino-acid polypeptide reads, in one-letter code: Transcription factor E2F7 (904 aa).

The interval 61-80 (TPDRNPITPVKPVDRQPQVE) is disordered. Position 96 is a phosphoserine (Ser-96). A DNA-binding region spans residues 143–212 (RKQKSLGLLC…VAKNQYGWHG (70 aa)). Over residues 252 to 269 (GERRKDGSPDPRDPHLLD) the composition is skewed to basic and acidic residues. Residues 252–283 (GERRKDGSPDPRDPHLLDFSEADYPSSSANSR) form a disordered region. A DNA-binding region spans residues 283 to 368 (RKDKSLRIMS…GRKPAFKWIG (86 aa)). Residue Ser-411 is modified to Phosphoserine. The disordered stretch occupies residues 560-628 (LSPESRSEED…VMPKKPSSST (69 aa)). Position 833 is a phosphoserine (Ser-833). Positions 846 to 904 (AEQSPAPATPKSIQRRHRETFFKTPGSLGDPVFRRKERNQSRNTSSAQRRLEISSSGPD) are disordered. Positions 886–904 (SRNTSSAQRRLEISSSGPD) are enriched in polar residues.

Belongs to the E2F/DP family. Interacts with HIF1A. Homodimer and heterodimer: mainly forms homodimers and, to a lesser extent, heterodimers with E2F8. Dimerization is important for DNA-binding. Interacts with MN1. In terms of tissue distribution, widely expressed with highest levels in skin and thymus and very low levels in brain, muscle and stomach. Expressed in trophoblast giant cells throughout placenta development (at protein level).

The protein resides in the nucleus. Atypical E2F transcription factor that participates in various processes such as angiogenesis, polyploidization of specialized cells and DNA damage response. Mainly acts as a transcription repressor that binds DNA independently of DP proteins and specifically recognizes the E2 recognition site 5'-TTTC[CG]CGC-3'. Directly represses transcription of classical E2F transcription factors such as E2F1. Acts as a regulator of S-phase by recognizing and binding the E2-related site 5'-TTCCCGCC-3' and mediating repression of G1/S-regulated genes. Plays a key role in polyploidization of cells in placenta and liver by regulating the endocycle, probably by repressing genes promoting cytokinesis and antagonizing action of classical E2F proteins (E2F1, E2F2 and/or E2F3). Required for placental development by promoting polyploidization of trophoblast giant cells. Also involved in DNA damage response: up-regulated by p53/TP53 following genotoxic stress and acts as a downstream effector of p53/TP53-dependent repression by mediating repression of indirect p53/TP53 target genes involved in DNA replication. Acts as a promoter of sprouting angiogenesis, possibly by acting as a transcription activator: associates with HIF1A, recognizes and binds the VEGFA promoter, which is different from canonical E2 recognition site, and activates expression of the VEGFA gene. Acts as a negative regulator of keratinocyte differentiation. This chain is Transcription factor E2F7 (E2f7), found in Mus musculus (Mouse).